Here is a 316-residue protein sequence, read N- to C-terminus: Pantothenate kinase (316 aa).

95–102 (GSVAVGKS) contributes to the ATP binding site.

Belongs to the prokaryotic pantothenate kinase family.

It is found in the cytoplasm. The catalysed reaction is (R)-pantothenate + ATP = (R)-4'-phosphopantothenate + ADP + H(+). It participates in cofactor biosynthesis; coenzyme A biosynthesis; CoA from (R)-pantothenate: step 1/5. In Shigella sonnei (strain Ss046), this protein is Pantothenate kinase.